The sequence spans 76 residues: Sulfur carrier protein TusA (76 aa).

Cys-14 serves as the catalytic Cysteine persulfide intermediate.

The protein belongs to the sulfur carrier protein TusA family. Interacts with IscS.

The protein resides in the cytoplasm. It participates in tRNA modification. Its function is as follows. Sulfur carrier protein involved in sulfur trafficking in the cell. Part of a sulfur-relay system required for 2-thiolation during synthesis of 2-thiouridine of the modified wobble base 5-methylaminomethyl-2-thiouridine (mnm(5)s(2)U) in tRNA. Interacts with IscS and stimulates its cysteine desulfurase activity. Accepts an activated sulfur from IscS, which is then transferred to TusD, and thus determines the direction of sulfur flow from IscS to 2-thiouridine formation. Also appears to be involved in sulfur transfer for the biosynthesis of molybdopterin. This Buchnera aphidicola subsp. Acyrthosiphon pisum (strain Tuc7) protein is Sulfur carrier protein TusA.